We begin with the raw amino-acid sequence, 611 residues long: Calmegin (611 aa).

The first 19 residues, 1 to 19 (MRFQGVGLCLGLLFITVNA), serve as a signal peptide directing secretion. At 20-471 (DFMDDGVEVE…LVIAAEERPW (452 aa)) the chain is on the lumenal side. At K128 the chain carries N6-acetyllysine. C151 and C185 are joined by a disulfide. The interval 254–335 (LDDVVPPINP…KAEKPEDWSD (82 aa)) is disordered. Basic and acidic residues predominate over residues 265 to 284 (REIDDPSDKKPEEWDDRAKI). 8 consecutive repeat copies span residues 267-280 (IDDP…EWDD), 284-297 (IPDP…DWDE), 303-316 (IEDS…GWLD), 322-335 (IPNP…DWSD), 339-352 (GEWE…PACQ), 356-369 (GEWK…PKYK), 370-383 (GIWR…PNYQ), and 384-397 (GLWS…PDYF). Residues 317–350 (DEPKFIPNPKAEKPEDWSDDMDGEWEAPHIPNPA) form an interaction with PPIB region. C351 and C355 are joined by a disulfide. A helical membrane pass occupies residues 472–492 (LWLMYLVMAGLPVALVASFCW). Residues 493–611 (PRKVKKKYED…SLRKRRVRKD (119 aa)) are Cytoplasmic-facing. The tract at residues 517-611 (AALEQEAEEE…SLRKRRVRKD (95 aa)) is disordered. Residues 526–584 (EKAPEKPEDVQEEKKPGEAEVVTVEKEVIGEPEEKSKEDRETLEGQEEVSKLSKSGSED) show a composition bias toward basic and acidic residues. A phosphoserine mark is found at S561, S578, S580, S582, S592, S595, and S602. Residues 602–611 (SLRKRRVRKD) are compositionally biased toward basic residues.

This sequence belongs to the calreticulin family. Interacts with PDILT and PPIB. Interacts with ADAM2. Interacts with ADAM1A, ADAM1B and ADAM3; these are protein-coding genes in mouse but may be pseudogenes in other organisms. Detected in testis (at protein level). Detected in testis.

The protein localises to the endoplasmic reticulum membrane. Functionally, functions during spermatogenesis as a chaperone for a range of client proteins that are important for sperm adhesion onto the egg zona pellucida and for subsequent penetration of the zona pellucida. Required for normal sperm migration from the uterus into the oviduct. Required for normal male fertility. Binds calcium ions. The chain is Calmegin (Clgn) from Mus musculus (Mouse).